The sequence spans 356 residues: Arginine kinase (356 aa).

Positions 9–91 (KLEAGFQKLQ…FDPIIEDYHI (83 aa)) constitute a Phosphagen kinase N-terminal domain. 64–68 (GVGIY) contacts L-arginine. The Phosphagen kinase C-terminal domain occupies 119-356 (FVISTRVRCG…AELIKLEQSA (238 aa)). ATP-binding positions include 122–126 (STRVR) and histidine 185. Glutamate 225 is an L-arginine binding site. Arginine 229 contributes to the ATP binding site. Cysteine 271 contacts L-arginine. Residues 280-284 (RASVH) and 309-314 (RGTRGE) contribute to the ATP site. Position 314 (glutamate 314) interacts with L-arginine.

It belongs to the ATP:guanido phosphotransferase family.

It carries out the reaction L-arginine + ATP = N(omega)-phospho-L-arginine + ADP + H(+). In Artemia franciscana (Brine shrimp), this protein is Arginine kinase (ARGK).